Here is a 125-residue protein sequence, read N- to C-terminus: MAPAKKGGEKKKGRSAINEVVTREYTINIHKRIHGVGFKKRAPRALKEIRKFAMKEMGTPDVRIDTRLNKAVWAKGIRNVPYRIRVRLSRKRNEDEDSPNKLYTLVTYVPVTTFKNLQTVNVDGN.

At methionine 1 the chain carries N-acetylmethionine. Serine 15 carries the phosphoserine modification. 2 positions are modified to N6-succinyllysine: lysine 55 and lysine 70. N6-acetyllysine; alternate is present on lysine 75. The residue at position 75 (lysine 75) is an N6-succinyllysine; alternate. Serine 98 carries the phosphoserine modification.

The protein belongs to the eukaryotic ribosomal protein eL31 family. As to quaternary structure, component of the large ribosomal subunit.

It is found in the cytoplasm. Functionally, component of the large ribosomal subunit. The ribosome is a large ribonucleoprotein complex responsible for the synthesis of proteins in the cell. This Pongo abelii (Sumatran orangutan) protein is Large ribosomal subunit protein eL31 (RPL31).